The sequence spans 390 residues: Homeobox protein Meis1 (390 aa).

In terms of domain architecture, MEIS N-terminal spans Gly-108 to Gly-192. Residues Arg-190–Thr-202 show a composition bias toward basic and acidic residues. The interval Arg-190–Phe-279 is disordered. The span at Arg-203 to Trp-213 shows a compositional bias: polar residues. Positions Arg-272–Met-334 form a DNA-binding region, homeobox; TALE-type. Positions Tyr-299–Arg-329 are interaction with DNA. Residues Ile-335 to Met-390 are required for transcriptional activation.

Belongs to the TALE/MEIS homeobox family. In terms of assembly, interacts with the N-terminal region of PBX1 to form a heterodimer which binds DNA including a cAMP-responsive sequence in CYP17. Also forms heterodimers with PBX2. Forms heterotrimers with PBX1 or PBX2 and a number of HOX proteins including HOXA9, HOXD4 and HOXD9 where it acts as a non-DNA-binding partner. Also forms heterotrimers with PBX1 and HOX proteins including HOXD9 and HOXD10 where PBX1 is the non-DNA-binding partner. Heterodimer with DLX3. Heterodimer with HOXB13. Expressed at high levels in the lung with lower levels detected in the heart and brain. Expressed in pancreatic islets (beta-cells and non-beta-cells).

It localises to the nucleus. Acts as a transcriptional regulator of PAX6. Also acts as a transcriptional activator of PF4 in complex with PBX1 or PBX2. Required for hematopoiesis, megakaryocyte lineage development and vascular patterning. May function as a cofactor for HOXA7 and HOXA9 in the induction of myeloid leukemias. The sequence is that of Homeobox protein Meis1 (Meis1) from Mus musculus (Mouse).